The following is a 264-amino-acid chain: S-methyl-5'-thioadenosine phosphorylase (264 aa).

Phosphate is bound by residues serine 14 and 55-56 (RH). A substrate-binding site is contributed by methionine 180. Threonine 181 is a binding site for phosphate. 204-206 (DVD) serves as a coordination point for substrate.

The protein belongs to the PNP/MTAP phosphorylase family. MTAP subfamily. As to quaternary structure, homodimer.

The catalysed reaction is S-methyl-5'-thioadenosine + phosphate = 5-(methylsulfanyl)-alpha-D-ribose 1-phosphate + adenine. It functions in the pathway amino-acid biosynthesis; L-methionine biosynthesis via salvage pathway; S-methyl-5-thio-alpha-D-ribose 1-phosphate from S-methyl-5'-thioadenosine (phosphorylase route): step 1/1. Not inhibited by adenosine, potently inhibited by MT-DADMe-immucillin A. Functionally, catalyzes the reversible phosphorylation of S-methyl-5'-thioadenosine (MTA) to adenine and 5-methylthioribose-1-phosphate. Involved in the breakdown of MTA, a major by-product of polyamine biosynthesis. Responsible for the first step in the methionine salvage pathway after MTA has been generated from S-adenosylmethionine. Prefers MTA, with 2% activity on adenosine, 0.8% activity on S-adenosyl-L-homocysteine and no activity on other tested nucleosides. This Mycobacterium tuberculosis (strain ATCC 25618 / H37Rv) protein is S-methyl-5'-thioadenosine phosphorylase.